Consider the following 184-residue polypeptide: Probable maltose O-acetyltransferase (184 aa).

Asn-84 is a binding site for acetyl-CoA. His-114 functions as the Proton donor/acceptor in the catalytic mechanism. Acetyl-CoA-binding positions include Gly-141, Ser-159, 164 to 165 (TK), Arg-179, and Lys-182.

It belongs to the transferase hexapeptide repeat family. Homodimer.

It carries out the reaction D-maltose + acetyl-CoA = 1-O-acetylmaltose + CoA. Functionally, catalyzes the CoA-dependent transfer of an acetyl group to maltose and other sugars. Acetylates glucose exclusively at the C6 position and maltose at the C6 position of the non-reducing end glucosyl moiety. Is able to acetylate maltooligosaccharides. In Bacillus subtilis (strain 168), this protein is Probable maltose O-acetyltransferase (maa).